The chain runs to 67 residues: DNA-directed RNA polymerase subunit omega (67 aa).

Belongs to the RNA polymerase subunit omega family. In terms of assembly, the RNAP catalytic core consists of 2 alpha, 1 beta, 1 beta' and 1 omega subunit. When a sigma factor is associated with the core the holoenzyme is formed, which can initiate transcription.

It carries out the reaction RNA(n) + a ribonucleoside 5'-triphosphate = RNA(n+1) + diphosphate. Functionally, promotes RNA polymerase assembly. Latches the N- and C-terminal regions of the beta' subunit thereby facilitating its interaction with the beta and alpha subunits. The chain is DNA-directed RNA polymerase subunit omega from Listeria welshimeri serovar 6b (strain ATCC 35897 / DSM 20650 / CCUG 15529 / CIP 8149 / NCTC 11857 / SLCC 5334 / V8).